A 261-amino-acid polypeptide reads, in one-letter code: High-affinity zinc uptake system membrane protein ZnuB (261 aa).

The next 7 membrane-spanning stretches (helical) occupy residues 8 to 28 (GWLA…FIIW), 54 to 74 (IDSF…LVWM), 84 to 104 (TILS…ISLM), 129 to 149 (CIIA…WNSI), 179 to 199 (ICIS…LLII), 215 to 235 (IGFS…LSFF), and 238 to 254 (VPTS…VYLL).

This sequence belongs to the ABC-3 integral membrane protein family.

The protein resides in the cell membrane. Its function is as follows. Involved in the high-affinity zinc uptake transport system. The polypeptide is High-affinity zinc uptake system membrane protein ZnuB (znuB) (Buchnera aphidicola subsp. Schizaphis graminum (strain Sg)).